Consider the following 1117-residue polypeptide: Guanylate cyclase D (1117 aa).

A signal peptide spans 1 to 66; it reads MAGLQQGCHF…ADSLSLLAWA (66 aa). The Extracellular portion of the chain corresponds to 67 to 479; that stretch reads RETFTLGVLG…CIRGVQPLGS (413 aa). C121 and C149 are joined by a disulfide. Residues 480–500 form a helical membrane-spanning segment; sequence LLTLTIACVLALVGGFLAYFI. Over 501-1117 the chain is Cytoplasmic; the sequence is RLGLQQLRLL…RKSGEAGPGP (617 aa). The tract at residues 529 to 557 is disordered; the sequence is TPSRRRPHVDSGSESRSVVDGGSPRSVTQ. In terms of domain architecture, Protein kinase spans 541 to 812; sequence SESRSVVDGG…PSLDQIYTQF (272 aa). The tract at residues 874-915 is interaction with NCALD; sequence MGTTVEPEYFDQVTIYFSDIVGFTTISALSEPIEVVGFLNDL. The region spanning 887–1017 is the Guanylate cyclase domain; that stretch reads TIYFSDIVGF…DTVNTASRME (131 aa). The segment at 1096-1117 is disordered; the sequence is GFAKARQGLAEPRKSGEAGPGP.

Belongs to the adenylyl cyclase class-4/guanylyl cyclase family. Interacts (via the catalytic domain) with NCALD. As to expression, found in a subset of olfactory neurons in the main olfactory epithelium.

The protein localises to the cell projection. The protein resides in the cilium membrane. The catalysed reaction is GTP = 3',5'-cyclic GMP + diphosphate. With respect to regulation, activated by Ca(2+). Functions as an olfactory receptor activated by urine odorants, uroguanylin and guanylin and as well by the volatile semiochemicals carbon disulfide (CS2) and carbon dioxide (CO2). Has guanylate cyclase activity upon binding of the ligand. Activation of GUCY2D neurons leads to the cGMP-dependent activation of the CNGA3 channels, membrane depolarization and an increase in action potential frequency. Signaling pathways activated by GUCY2D may trigger social behaviors such as acquisition of food preference. The sequence is that of Guanylate cyclase D from Mus musculus (Mouse).